The sequence spans 2705 residues: Teneurin-1 (2705 aa).

2 disordered regions span residues 1-73 (MEQM…STQD) and 135-222 (CLSS…TQDS). Positions 1-299 (MEQMDCKPYQ…KPYRCCNWKC (299 aa)) constitute a Teneurin N-terminal domain. At 1-305 (MEQMDCKPYQ…NWKCTALSAT (305 aa)) the chain is on the cytoplasmic side. Positions 32 to 46 (DGRKQRQSYDSRETL) are enriched in basic and acidic residues. The short motif at 62-65 (RKRK) is the Nuclear localization signal (NLS) element. Residues 135 to 147 (CLSSRANSALSLT) show a composition bias toward polar residues. A compositionally biased stretch (basic and acidic residues) spans 148-157 (DTDHERKSDG). Over residues 173 to 182 (PLPPPPPPPH) the composition is skewed to pro residues. The Required for interaction with SORBS1 (Ten-1 ICD form) signature appears at 271-278 (PPPRPLPR). Residues 306-326 (AITVTLALLLAYVIAVHLFGL) form a helical membrane-spanning segment. Residues 327–2705 (TWQLQPVEGQ…FMRQSEIGRR (2379 aa)) lie on the Extracellular side of the membrane. N-linked (GlcNAc...) asparagine glycosylation is present at Asn-414. 8 consecutive EGF-like domains span residues 509–540 (VLDDCSTNCNGNGECISGHCHCFPGFLGPDCA), 541–572 (KDSCPVLCSGNGEYEKGHCVCRNGWKGPECDV), 573–605 (PEEQCIDPTCFGHGTCIMGVCICVPGYKGEICE), 606–638 (EEDCLDPMCSGHGVCVQGECHCSAGWGGVNCET), 639–672 (SLPICQEHCSGHGTFLLDVGLCSCEPQWTGSDCS), 673–702 (TELCTLDCGSHGVCSRGICQCEEGWVGPTC), 703–734 (EERTCHSHCAEHGQCKDGKCECSPGWEGDHCT), and 735–769 (IDGCPGLCYGNGRCTLDQNGWHCVCQVGWSGSGCN). 22 cysteine pairs are disulfide-bonded: Cys-513/Cys-523, Cys-517/Cys-528, Cys-530/Cys-539, Cys-548/Cys-559, Cys-561/Cys-570, Cys-577/Cys-588, Cys-582/Cys-593, Cys-595/Cys-604, Cys-609/Cys-620, Cys-614/Cys-625, Cys-627/Cys-636, Cys-647/Cys-660, Cys-662/Cys-671, Cys-676/Cys-686, Cys-680/Cys-691, Cys-693/Cys-702, Cys-707/Cys-717, Cys-711/Cys-722, Cys-724/Cys-733, Cys-738/Cys-748, Cys-742/Cys-757, and Cys-759/Cys-768. N-linked (GlcNAc...) asparagine glycans are attached at residues Asn-878 and Asn-1057. NHL repeat units follow at residues 1167–1192 (LFAPVALTSGPDGSVYIGDFNFVRRI), 1202–1246 (LELR…AKSL), 1272–1316 (SHCG…NGMI), 1331–1382 (LSCD…IAGR), and 1461–1504 (CFSG…VSRN). Residues 1514–1533 (YEIASPADQELYQFTINGTH) form a YD 1 repeat. Residues Asn-1530 and Asn-1547 are each glycosylated (N-linked (GlcNAc...) asparagine). YD repeat units follow at residues 1550 to 1570 (YSGEGDVATITSSNGNSVHIR), 1588 to 1612 (YWLTISSNGVLKRVYAQGYNLALMT), 1613 to 1634 (YPGNTGLLATKSDENGWTTVYE), and 1635 to 1655 (YDSDGHLTNATFPTGEVSSFH). 5 N-linked (GlcNAc...) asparagine glycosylation sites follow: Asn-1643, Asn-1679, Asn-1737, Asn-1761, and Asn-1822. 11 YD repeats span residues 1825–1844 (YSHSGLVTYIQRGTWTEKME), 1845–1865 (YDPSGNIISRTWADGKIWSYT), 1866–1884 (YLEKSVMLLLHSQRRYIFE), 1885–1905 (YDQSDYLLSVTMPSMVRHALQ), 1913–1929 (YRNIYTPPDSGAAFIQD), 1930–1949 (VTRDGRLLQTLYPGTGRRVL), 1950–1969 (YKYSKQSRLSEILYDTTQVT), 1972–1992 (YEESSGVIKTIHLMHDGFICT), 1995–2015 (YRQTGPLIGRQIFRFSEEGLV), 2065–2085 (YDLNQVITTTVMKHTKIFSAN), and 2093–2113 (YEILKSIAYWMTIQYDNMGRM). An N-linked (GlcNAc...) asparagine glycan is attached at Asn-2125. YD repeat units follow at residues 2133-2153 (YDRDGQLQTVSVNDKTQWRYS), 2154-2174 (YDLNGNINLLSHGNSARLTPL), 2176-2196 (YDLRDRITRLGEIQYKMDEDG), 2208-2228 (YNSNGLLNKAYNKVSGWTVQY), and 2230-2250 (YDGLGRRVASKSSLGQHLQFF). Asn-2265 carries an N-linked (GlcNAc...) asparagine glycan. YD repeat units follow at residues 2276-2293 (YDLQGHLIAMELSSGEEY) and 2294-2317 (YVACDNTGTPLAVFSSRGQVIKEI). Residue Asn-2582 is glycosylated (N-linked (GlcNAc...) asparagine).

Belongs to the tenascin family. Teneurin subfamily. Homodimer; disulfide-linked. Heterodimer with other teneurins. Ten-1 ICD interacts with SORBS1 (via third SH3 domain). Interacts with MBD1 isoform 2. In terms of processing, derives from the plasma membrane form by proteolytic processing. Further proteolytic cleavage may be generated. Derives from the plasma membrane form by proteolytic cleavage and translocates to the nucleus. In terms of tissue distribution, expressed in the neurons of the developing visual system and in fetal brain.

It localises to the cell membrane. The protein resides in the nucleus. Its subcellular location is the nucleus speckle. The protein localises to the nucleus matrix. It is found in the cytoplasm. It localises to the cytoskeleton. Functionally, involved in neural development, regulating the establishment of proper connectivity within the nervous system. May function as a cellular signal transducer. In terms of biological role, plays a role in the regulation of neuroplasticity in the limbic system. Mediates a rapid reorganization of actin- and tubulin-based cytoskeleton elements with an increase in dendritic arborization and spine density formation of neurons in the hippocampus and amygdala. Induces BDNF transcription inhibition in neurons. Activates the mitogen-activated protein (MAP) kinase 2 (MEK2) and extracellular signal-regulated kinase (ERK) cascade. Induces gene transcription activation. This chain is Teneurin-1 (TENM1), found in Gallus gallus (Chicken).